A 328-amino-acid chain; its full sequence is Pancreas transcription factor 1 subunit alpha (328 aa).

The bHLH domain occupies 163–215 (QLRQAANVRERRRMQSINDAFEGLRSHIPTLPYEKRLSKVDTLRLAIGYINFL). 2 disordered regions span residues 259 to 278 (RGTR…PLAG) and 305 to 328 (DPRK…EFVS).

In terms of assembly, component of the pancreas transcription factor 1 complex (PTF1) which is composed of TCF3/p75, TCF12/p64 and PTF1A/p48. TCF3 is responsible for the nuclear import of the p48/p64 complex. Interacts with TCF3 and RBPSUH/RBP-Jkappa. Pancreas-specific (at protein level). Loss of expression is seen in ductal type pancreas cancers.

It localises to the nucleus. The protein resides in the cytoplasm. Its function is as follows. Transcription factor implicated in the cell fate determination in various organs. Binds to the E-box consensus sequence 5'-CANNTG-3'. Plays a role in early and late pancreas development and differentiation. Important for determining whether cells allocated to the pancreatic buds continue towards pancreatic organogenesis or revert back to duodenal fates. May be involved in the maintenance of exocrine pancreas-specific gene expression including ELA1 and amylase. Required for the formation of pancreatic acinar and ductal cells. Plays an important role in cerebellar development. Directly regulated by FOXN4 and RORC during retinal development, FOXN4-PTF1A pathway plays a central role in directing the differentiation of retinal progenitors towards horizontal and amacrine fates. The chain is Pancreas transcription factor 1 subunit alpha (PTF1A) from Homo sapiens (Human).